Consider the following 319-residue polypeptide: Ribonucleoside-diphosphate reductase small chain (319 aa).

Fe cation contacts are provided by Asp70, Glu101, and His104. Residue Tyr108 is part of the active site. The Fe cation site is built by Glu163, Glu197, and His200. Residues Phe313 to Phe319 are interaction with R1.

Belongs to the ribonucleoside diphosphate reductase small chain family. Interacts with RNR1/OPG080 subunit. Can interact with host RNR1 supunit. The cofactor is Fe cation.

The enzyme catalyses a 2'-deoxyribonucleoside 5'-diphosphate + [thioredoxin]-disulfide + H2O = a ribonucleoside 5'-diphosphate + [thioredoxin]-dithiol. Ribonucleoside-diphosphate reductase holoenzyme provides the precursors necessary for viral DNA synthesis. Allows virus growth in non-dividing cells. Catalyzes the biosynthesis of deoxyribonucleotides from the corresponding ribonucleotides. This chain is Ribonucleoside-diphosphate reductase small chain (OPG048), found in Vaccinia virus (strain L-IVP) (VACV).